Reading from the N-terminus, the 901-residue chain is Alanine--tRNA ligase (901 aa).

The Zn(2+) site is built by H581, H585, C684, and H688.

The protein belongs to the class-II aminoacyl-tRNA synthetase family. Zn(2+) serves as cofactor.

The protein resides in the cytoplasm. The catalysed reaction is tRNA(Ala) + L-alanine + ATP = L-alanyl-tRNA(Ala) + AMP + diphosphate. In terms of biological role, catalyzes the attachment of alanine to tRNA(Ala) in a two-step reaction: alanine is first activated by ATP to form Ala-AMP and then transferred to the acceptor end of tRNA(Ala). Also edits incorrectly charged Ser-tRNA(Ala) and Gly-tRNA(Ala) via its editing domain. This is Alanine--tRNA ligase from Mycobacterium marinum (strain ATCC BAA-535 / M).